Consider the following 373-residue polypeptide: Phospho-N-acetylmuramoyl-pentapeptide-transferase (373 aa).

The next 10 helical transmembrane spans lie at 34–54 (GALFTSALIVFLFGPRIISSL), 78–98 (TPTMGGLMILAGIVVSSLLWA), 100–120 (LANVYVVATLLVTLGFGAIGF), 141–161 (LGLEFIIAAIAVYFMMNTALS), 181–201 (FMLNLGMFFVLFGAFVIVSAG), 212–232 (GLAIVPVMIAAASFGVIAYLA), 252–272 (LAVVLGAVIGAGLGFLWFNAP), 275–295 (AIFMGDTGSLALGGLIGTVAV), 301–321 (IVMAIIGGLFVLEALSVIIQV), and 350–370 (QVVVRFWIVAVILAMIGLSTL).

It belongs to the glycosyltransferase 4 family. MraY subfamily. Mg(2+) is required as a cofactor.

The protein localises to the cell inner membrane. The enzyme catalyses UDP-N-acetyl-alpha-D-muramoyl-L-alanyl-gamma-D-glutamyl-meso-2,6-diaminopimeloyl-D-alanyl-D-alanine + di-trans,octa-cis-undecaprenyl phosphate = di-trans,octa-cis-undecaprenyl diphospho-N-acetyl-alpha-D-muramoyl-L-alanyl-D-glutamyl-meso-2,6-diaminopimeloyl-D-alanyl-D-alanine + UMP. The protein operates within cell wall biogenesis; peptidoglycan biosynthesis. Functionally, catalyzes the initial step of the lipid cycle reactions in the biosynthesis of the cell wall peptidoglycan: transfers peptidoglycan precursor phospho-MurNAc-pentapeptide from UDP-MurNAc-pentapeptide onto the lipid carrier undecaprenyl phosphate, yielding undecaprenyl-pyrophosphoryl-MurNAc-pentapeptide, known as lipid I. This chain is Phospho-N-acetylmuramoyl-pentapeptide-transferase, found in Rhizobium rhizogenes (strain K84 / ATCC BAA-868) (Agrobacterium radiobacter).